A 184-amino-acid polypeptide reads, in one-letter code: GTP cyclohydrolase 1 (184 aa).

Residues Cys-74, His-77, and Cys-145 each coordinate Zn(2+).

This sequence belongs to the GTP cyclohydrolase I family. Toroid-shaped homodecamer, composed of two pentamers of five dimers.

The catalysed reaction is GTP + H2O = 7,8-dihydroneopterin 3'-triphosphate + formate + H(+). It functions in the pathway cofactor biosynthesis; 7,8-dihydroneopterin triphosphate biosynthesis; 7,8-dihydroneopterin triphosphate from GTP: step 1/1. The sequence is that of GTP cyclohydrolase 1 (folE) from Aquifex aeolicus (strain VF5).